A 543-amino-acid chain; its full sequence is CTP synthase (543 aa).

Positions Met1 to Leu265 are amidoligase domain. CTP is bound at residue Ser13. Ser13 serves as a coordination point for UTP. ATP-binding positions include Ser14–Ile19 and Asp71. Mg(2+)-binding residues include Asp71 and Glu139. CTP-binding positions include Asp146–Glu148, Lys186–Gln191, and Lys222. Residues Lys186–Gln191 and Lys222 each bind UTP. The 252-residue stretch at Thr290–Lys541 folds into the Glutamine amidotransferase type-1 domain. Gly351 is a binding site for L-glutamine. The active-site Nucleophile; for glutamine hydrolysis is the Cys378. L-glutamine-binding positions include Leu379–Gln382, Glu402, and Arg469. Catalysis depends on residues His514 and Glu516.

It belongs to the CTP synthase family. Homotetramer.

It carries out the reaction UTP + L-glutamine + ATP + H2O = CTP + L-glutamate + ADP + phosphate + 2 H(+). The enzyme catalyses L-glutamine + H2O = L-glutamate + NH4(+). It catalyses the reaction UTP + NH4(+) + ATP = CTP + ADP + phosphate + 2 H(+). The protein operates within pyrimidine metabolism; CTP biosynthesis via de novo pathway; CTP from UDP: step 2/2. Allosterically activated by GTP, when glutamine is the substrate; GTP has no effect on the reaction when ammonia is the substrate. The allosteric effector GTP functions by stabilizing the protein conformation that binds the tetrahedral intermediate(s) formed during glutamine hydrolysis. Inhibited by the product CTP, via allosteric rather than competitive inhibition. Its function is as follows. Catalyzes the ATP-dependent amination of UTP to CTP with either L-glutamine or ammonia as the source of nitrogen. Regulates intracellular CTP levels through interactions with the four ribonucleotide triphosphates. This chain is CTP synthase, found in Pseudomonas fluorescens (strain Pf0-1).